Reading from the N-terminus, the 312-residue chain is Methionyl-tRNA formyltransferase (312 aa).

110-113 (SLLP) provides a ligand contact to (6S)-5,6,7,8-tetrahydrofolate.

The protein belongs to the Fmt family.

It catalyses the reaction L-methionyl-tRNA(fMet) + (6R)-10-formyltetrahydrofolate = N-formyl-L-methionyl-tRNA(fMet) + (6S)-5,6,7,8-tetrahydrofolate + H(+). Functionally, attaches a formyl group to the free amino group of methionyl-tRNA(fMet). The formyl group appears to play a dual role in the initiator identity of N-formylmethionyl-tRNA by promoting its recognition by IF2 and preventing the misappropriation of this tRNA by the elongation apparatus. The polypeptide is Methionyl-tRNA formyltransferase (Mycobacterium ulcerans (strain Agy99)).